The chain runs to 104 residues: N(4)-acetylcytidine amidohydrolase (104 aa).

One can recognise an ASCH domain in the interval 7-93 (MTFFSRFEAD…EVIQEIYPGI (87 aa)). K22 functions as the Proton acceptor in the catalytic mechanism. T25 (nucleophile) is an active-site residue. Catalysis depends on E75, which acts as the Proton donor.

This sequence belongs to the N(4)-acetylcytidine amidohydrolase family.

The enzyme catalyses N(4)-acetylcytidine + H2O = cytidine + acetate + H(+). It carries out the reaction N(4)-acetyl-2'-deoxycytidine + H2O = 2'-deoxycytidine + acetate + H(+). The catalysed reaction is N(4)-acetylcytosine + H2O = cytosine + acetate + H(+). Its function is as follows. Catalyzes the hydrolysis of N(4)-acetylcytidine (ac4C). The chain is N(4)-acetylcytidine amidohydrolase from Vibrio vulnificus (strain YJ016).